The sequence spans 486 residues: Bile acid receptor (486 aa).

K132 is covalently cross-linked (Glycyl lysine isopeptide (Lys-Gly) (interchain with G-Cter in SUMO1)). The segment at residues 134-209 (DELCVVCGDR…MGMLAECMYT (76 aa)) is a DNA-binding region (nuclear receptor). The segment at 137–157 (CVVCGDRASGYHYNALTCEGC) adopts an NR C4-type zinc-finger fold. Phosphoserine; by PKC/PRKCA is present on residues S145 and S164. N6-acetyllysine; by EP300 is present on K167. Residues 173-197 (CKNGGNCVMDMYMRRKCQECRLRKC) form an NR C4-type zinc finger. At K220 the chain carries N6-methyllysine; by SETD7. K227 is modified (N6-acetyllysine; by EP300). The NR LBD domain maps to 262-486 (DQQTLLHFIM…PLLCEIWDVQ (225 aa)). K289 is covalently cross-linked (Glycyl lysine isopeptide (Lys-Gly) (interchain with G-Cter in SUMO1)). Chenodeoxycholate contacts are provided by R345, Y375, and Y383. Phosphothreonine; by PKC/PRKCZ is present on T456. H461 is a chenodeoxycholate binding site.

This sequence belongs to the nuclear hormone receptor family. NR1 subfamily. As to quaternary structure, heterodimer (via C-terminus) with RXRA (via DBD); the heterodimerization enhances the binding affinity for LXXLL motifs from coactivators. Binds DNA predominantly as a heterodimer with RXRA. After activation by agonist binding interacts with coactivators. Interacts with NCOA1, NCOA2, PPARGC1A, CARM1, SETD7, PRMT1, GPS2, SMARCA4 and MED1. Interacts with EP300 and SMARCD1. Interacts with XRCC5 and XRCC6; decreasing NR1H4/FXR transactivation activity towards ABCB11/BSEP. Interacts with PAGR1 and NCOA6; indicative for an association with an MLL2/MLL3 complex (ASCOM). In terms of processing, acetylated by EP300. Lys-227 as is the major acetylation site for EP300; the dynamicly regulated acetylation inhibits heterodimerization with RXRA and transactivation activity. Deacetylated by SIRT1. Methylation may increase transactivation of target genes. Post-translationally, phosphorylation by PKC/PRKCA increases transactivation activity by promoting association with PPARGC1A. In terms of processing, sumoylated upon ligand binding. As to expression, liver and hepatocyte-related cells express mainly FXRalpha1-type isoforms with isoform 3 and isoform 4 in approximately equal proportions. In intestine and kidney mainly FXRalpha2-type isoforms are expressed with isoform 1 and isoform 2 in approximately equal proportions. Expressed in pancreatic beta cells and macrophages.

The protein localises to the nucleus. In terms of biological role, ligand-activated transcription factor. Receptor for bile acids (BAs) such as chenodeoxycholic acid (CDCA), lithocholic acid, deoxycholic acid (DCA) and allocholic acid (ACA). Plays a essential role in BA homeostasis through the regulation of genes involved in BA synthesis, conjugation and enterohepatic circulation. Also regulates lipid and glucose homeostasis and is involved innate immune response. The FXR-RXR heterodimer binds predominantly to farnesoid X receptor response elements (FXREs) containing two inverted repeats of the consensus sequence 5'-AGGTCA-3' in which the monomers are spaced by 1 nucleotide (IR-1) but also to tandem repeat DR1 sites with lower affinity, and can be activated by either FXR or RXR-specific ligands. It is proposed that monomeric nuclear receptors such as NR5A2/LRH-1 bound to coregulatory nuclear responsive element (NRE) halfsites located in close proximity to FXREs modulate transcriptional activity. In the liver activates transcription of the corepressor NR0B2 thereby indirectly inhibiting CYP7A1 and CYP8B1 (involved in BA synthesis) implicating at least in part histone demethylase KDM1A resulting in epigenomic repression, and SLC10A1/NTCP (involved in hepatic uptake of conjugated BAs). Activates transcription of the repressor MAFG (involved in regulation of BA synthesis). Activates transcription of SLC27A5/BACS and BAAT (involved in BA conjugation), ABCB11/BSEP (involved in bile salt export) by directly recruiting histone methyltransferase CARM1, and ABCC2/MRP2 (involved in secretion of conjugated BAs) and ABCB4 (involved in secretion of phosphatidylcholine in the small intestine). Activates transcription of SLC27A5/BACS and BAAT (involved in BA conjugation), ABCB11/BSEP (involved in bile salt export) by directly recruiting histone methyltransferase CARM1, and ABCC2/MRP2 (involved in secretion of conjugated BAs) and ABCB4 (involved in secretion of phosphatidylcholine in the small intestine). In the intestine activates FGF19 expression and secretion leading to hepatic CYP7A1 repression. The function also involves the coordinated induction of hepatic KLB/beta-klotho expression. Regulates transcription of liver UGT2B4 and SULT2A1 involved in BA detoxification; binding to the UGT2B4 promoter seems to imply a monomeric transactivation independent of RXRA. Modulates lipid homeostasis by activating liver NR0B2/SHP-mediated repression of SREBF1 (involved in de novo lipogenesis), expression of PLTP (involved in HDL formation), SCARB1 (involved in HDL hepatic uptake), APOE, APOC1, APOC4, PPARA (involved in beta-oxidation of fatty acids), VLDLR and SDC1 (involved in the hepatic uptake of LDL and IDL remnants), and inhibiting expression of MTTP (involved in VLDL assembly. Increases expression of APOC2 (promoting lipoprotein lipase activity implicated in triglyceride clearance). Transrepresses APOA1 involving a monomeric competition with NR2A1 for binding to a DR1 element. Also reduces triglyceride clearance by inhibiting expression of ANGPTL3 and APOC3 (both involved in inhibition of lipoprotein lipase). Involved in glucose homeostasis by modulating hepatic gluconeogenesis through activation of NR0B2/SHP-mediated repression of respective genes. Modulates glycogen synthesis (inducing phosphorylation of glycogen synthase kinase-3). Modulates glucose-stimulated insulin secretion and is involved in insulin resistance. Involved in intestinal innate immunity. Plays a role in protecting the distal small intestine against bacterial overgrowth and preservation of the epithelial barrier. Down-regulates inflammatory cytokine expression in several types of immune cells including macrophages and mononuclear cells. Mediates trans-repression of TLR4-induced cytokine expression; the function seems to require its sumoylation and prevents N-CoR nuclear receptor corepressor clearance from target genes such as IL1B and NOS2. Involved in the TLR9-mediated protective mechanism in intestinal inflammation. Plays an anti-inflammatory role in liver inflammation; proposed to inhibit pro-inflammatory (but not antiapoptotic) NF-kappa-B signaling). Functionally, promotes transcriptional activation of target genes NR0B2/SHP (inducible by unconjugated CDCA), SLC51B/OSTB (inducible by unconjugated CDCA and DCA) and FABP6/IBAP; low activity for ABCB11/BSEP (inducible by unconjugated CDCA, DCA and ACA); not inducible by taurine- and glycine-amidated CDCA. Its function is as follows. Promotes transcriptional activation of target genes ABCB11/BSEP (inducible by unconjugated CDCA, DCA and ACA), NR0B2/SHP (inducible by unconjugated CDCA DCA and ACA), SLC51B/OSTB (inducible by unconjugated CDCA and DCA) and FABP6/IBAP; not inducible by taurine- and glycine-amidated CDCA. Promotes transcriptional activation of target genes NR0B2/SHP (inducible by unconjugated CDCA), SLC51B/OSTB (inducible by unconjugated CDCA and DCA) and IBAP; low activity for ABCB11/BSEP (inducible by unconjugated CDCA, DCA and ACA); not inducible by taurine- and glycine-amidated CDCA. In terms of biological role, promotes transcriptional activation of target genes ABCB11/BSEP (inducible by unconjugated CDCA, ACA and DCA), NR0B2/SHP (inducible by unconjugated CDCA, ACA and DCA), SLC51B/OSTB (inducible by unconjugated CDCA and DCA) and FABP6/IBAP; most efficient isoform compared to isoforms 1 to 3; not inducible by taurine- and glycine-amidated CDCA. This chain is Bile acid receptor (NR1H4), found in Homo sapiens (Human).